We begin with the raw amino-acid sequence, 86 residues long: Putative membrane protein insertion efficiency factor (86 aa).

Belongs to the UPF0161 family.

The protein localises to the cell inner membrane. Its function is as follows. Could be involved in insertion of integral membrane proteins into the membrane. The polypeptide is Putative membrane protein insertion efficiency factor (Histophilus somni (strain 129Pt) (Haemophilus somnus)).